Reading from the N-terminus, the 151-residue chain is Cell division protein SepF (151 aa).

Positions 31–53 (EEVEEPRRRSRTGVKQERETGQN) are disordered.

This sequence belongs to the SepF family. As to quaternary structure, homodimer. Interacts with FtsZ.

It localises to the cytoplasm. Its function is as follows. Cell division protein that is part of the divisome complex and is recruited early to the Z-ring. Probably stimulates Z-ring formation, perhaps through the cross-linking of FtsZ protofilaments. Its function overlaps with FtsA. In Halalkalibacterium halodurans (strain ATCC BAA-125 / DSM 18197 / FERM 7344 / JCM 9153 / C-125) (Bacillus halodurans), this protein is Cell division protein SepF.